Here is a 494-residue protein sequence, read N- to C-terminus: Ribosomal lysine N-methyltransferase 4 (494 aa).

Positions 25-265 (PKIEIKDLCC…KNEQVYNIYG (241 aa)) constitute an SET domain. Y264 is a binding site for S-adenosyl-L-methionine.

Belongs to the class V-like SAM-binding methyltransferase superfamily. Histone-lysine methyltransferase family. SETD6 subfamily.

It localises to the nucleus. S-adenosyl-L-methionine-dependent protein-lysine N-methyltransferase that monomethylates 60S ribosomal protein L42 (RPL42A and RPL42B) at 'Lys-55'. The sequence is that of Ribosomal lysine N-methyltransferase 4 from Saccharomyces cerevisiae (strain ATCC 204508 / S288c) (Baker's yeast).